The chain runs to 90 residues: U7-theraphotoxin-Hhn1a 3 (90 aa).

Residues 1-26 (MKTAIFTVVLALAVFAVLSFGWEANG) form the signal peptide. The propeptide occupies 27–50 (KALSEEFTELIHEKEAASETEARE). 3 disulfide bridges follow: cysteine 51/cysteine 65, cysteine 58/cysteine 70, and cysteine 64/cysteine 81.

This sequence belongs to the neurotoxin 10 (Hwtx-1) family. 13 (Hntx-13) subfamily. In terms of tissue distribution, expressed by the venom gland.

It is found in the secreted. Functionally, ion channel inhibitor. The sequence is that of U7-theraphotoxin-Hhn1a 3 from Cyriopagopus hainanus (Chinese bird spider).